A 180-amino-acid chain; its full sequence is Kappa-casein (180 aa).

An N-terminal signal peptide occupies residues 1 to 21 (MMKHFLLVVNILAVTLPFLAA). Residues threonine 132, threonine 142, threonine 147, and threonine 153 are each glycosylated (O-linked (GalNAc...) threonine). Serine 160 is subject to Phosphoserine; alternate. O-linked (GalNAc...) serine; alternate glycosylation is present at serine 160.

This sequence belongs to the kappa-casein family. Mammary gland specific. Secreted in milk.

The protein resides in the secreted. Its function is as follows. Kappa-casein stabilizes micelle formation, preventing casein precipitation in milk. The chain is Kappa-casein (CSN3) from Oryctolagus cuniculus (Rabbit).